The sequence spans 224 residues: A-type ATP synthase subunit D (224 aa).

The segment covering 200-209 (KKVKDKKEAQ) has biased composition (basic and acidic residues). The tract at residues 200–224 (KKVKDKKEAQEEAADEAAAAESTGA) is disordered. Positions 215 to 224 (EAAAAESTGA) are enriched in low complexity.

It belongs to the V-ATPase D subunit family. In terms of assembly, has multiple subunits with at least A(3), B(3), C, D, E, F, H, I and proteolipid K(x).

It is found in the cell membrane. Its function is as follows. Component of the A-type ATP synthase that produces ATP from ADP in the presence of a proton gradient across the membrane. This chain is A-type ATP synthase subunit D, found in Halobacterium salinarum (strain ATCC 29341 / DSM 671 / R1).